Consider the following 145-residue polypeptide: Large ribosomal subunit protein uL13 (145 aa).

It belongs to the universal ribosomal protein uL13 family. Part of the 50S ribosomal subunit.

This protein is one of the early assembly proteins of the 50S ribosomal subunit, although it is not seen to bind rRNA by itself. It is important during the early stages of 50S assembly. The polypeptide is Large ribosomal subunit protein uL13 (Exiguobacterium sibiricum (strain DSM 17290 / CCUG 55495 / CIP 109462 / JCM 13490 / 255-15)).